The following is a 368-amino-acid chain: tRNA/tmRNA (uracil-C(5))-methyltransferase (368 aa).

Residues Q192, Y220, N225, E241, and D301 each contribute to the S-adenosyl-L-methionine site. The active-site Nucleophile is the C326. E360 (proton acceptor) is an active-site residue.

It belongs to the class I-like SAM-binding methyltransferase superfamily. RNA M5U methyltransferase family. TrmA subfamily.

The catalysed reaction is uridine(54) in tRNA + S-adenosyl-L-methionine = 5-methyluridine(54) in tRNA + S-adenosyl-L-homocysteine + H(+). The enzyme catalyses uridine(341) in tmRNA + S-adenosyl-L-methionine = 5-methyluridine(341) in tmRNA + S-adenosyl-L-homocysteine + H(+). Its function is as follows. Dual-specificity methyltransferase that catalyzes the formation of 5-methyluridine at position 54 (m5U54) in all tRNAs, and that of position 341 (m5U341) in tmRNA (transfer-mRNA). In Actinobacillus pleuropneumoniae serotype 5b (strain L20), this protein is tRNA/tmRNA (uracil-C(5))-methyltransferase.